The following is a 286-amino-acid chain: ATP synthase gamma chain (286 aa).

The protein belongs to the ATPase gamma chain family. In terms of assembly, F-type ATPases have 2 components, CF(1) - the catalytic core - and CF(0) - the membrane proton channel. CF(1) has five subunits: alpha(3), beta(3), gamma(1), delta(1), epsilon(1). CF(0) has three main subunits: a, b and c.

The protein localises to the cell inner membrane. In terms of biological role, produces ATP from ADP in the presence of a proton gradient across the membrane. The gamma chain is believed to be important in regulating ATPase activity and the flow of protons through the CF(0) complex. This chain is ATP synthase gamma chain, found in Shewanella sp. (strain MR-4).